Here is a 348-residue protein sequence, read N- to C-terminus: Alcohol dehydrogenase 2 (348 aa).

At Ser-2 the chain carries N-acetylserine. A Zn(2+)-binding site is contributed by Cys-44. Positions 45, 46, and 49 each coordinate NAD(+). His-67, Glu-68, Cys-98, Cys-101, Cys-104, Cys-112, and Cys-154 together coordinate Zn(2+). Residues Gly-181, Gly-182, Leu-183, Asp-202, and Lys-207 each contribute to the NAD(+) site. A Phosphoserine modification is found at Ser-213. Phe-222 is a binding site for NAD(+). Thr-223 is subject to Phosphothreonine. Residues Lys-226 and Lys-234 each participate in a glycyl lysine isopeptide (Lys-Gly) (interchain with G-Cter in ubiquitin) cross-link. Val-269 is an NAD(+) binding site. Phosphoserine is present on Ser-279. Residue Lys-287 forms a Glycyl lysine isopeptide (Lys-Gly) (interchain with G-Cter in ubiquitin) linkage. 2 residues coordinate NAD(+): Ser-294 and Val-296. Ser-316 bears the Phosphoserine mark. Residue Lys-319 forms a Glycyl lysine isopeptide (Lys-Gly) (interchain with G-Cter in ubiquitin) linkage. Arg-341 is a binding site for NAD(+).

It belongs to the zinc-containing alcohol dehydrogenase family. Homotetramer. Zn(2+) serves as cofactor.

It is found in the cytoplasm. It catalyses the reaction a primary alcohol + NAD(+) = an aldehyde + NADH + H(+). The enzyme catalyses a secondary alcohol + NAD(+) = a ketone + NADH + H(+). The catalysed reaction is ethanol + NAD(+) = acetaldehyde + NADH + H(+). It carries out the reaction butan-1-ol + NAD(+) = butanal + NADH + H(+). It catalyses the reaction hexan-1-ol + NAD(+) = hexanal + NADH + H(+). Preferentially oxidative, glucose-repressed isozyme that catalyzes the conversion of ethanol to acetaldehyde. Main enzyme involved in ethanol consumption. Acts on a variety of primary unbranched aliphatic alcohols. Also produces ethanol from glucose, albeit less than ADH1. This Saccharomyces cerevisiae (strain ATCC 204508 / S288c) (Baker's yeast) protein is Alcohol dehydrogenase 2 (ADH2).